Consider the following 239-residue polypeptide: L-cystine transport system permease protein TcyL (239 aa).

The ABC transmembrane type-1 domain occupies 21–216 (LPVTLYILTL…AVAVLFEWFF (196 aa)). The next 4 membrane-spanning stretches (helical) occupy residues 25-45 (LYILTLSLLFGFVLGLFLALP), 69-89 (IMVQLFIVFYGIPALTGLIGI), 96-116 (PFYAAVATYALSNAAAAAEII), and 196-216 (EVYIALSIVYYAVAVLFEWFF).

It belongs to the binding-protein-dependent transport system permease family. The complex is composed of two ATP-binding proteins (TcyN), two transmembrane proteins (TcyL and TcyM) and two solute-binding proteins (TcyJ and TcyK).

The protein localises to the cell membrane. Part of the ABC transporter complex TcyJKLMN involved in L-cystine import. Probably responsible for the translocation of the substrate across the membrane. Is also involved in cystathionine, djenkolate, and S-methylcysteine transport. The polypeptide is L-cystine transport system permease protein TcyL (tcyL) (Bacillus subtilis (strain 168)).